A 166-amino-acid chain; its full sequence is Phospholipase A2 inhibitor clone 04 (166 aa).

The first 19 residues, 1 to 19 (MRLILLSSLLLLGIFLANG), serve as a signal peptide directing secretion. Positions 46–161 (LKDAFLTVHR…CDDNRLVVCE (116 aa)) constitute a C-type lectin domain. 2 disulfides stabilise this stretch: cysteine 83–cysteine 160 and cysteine 138–cysteine 152. A glycan (N-linked (GlcNAc...) asparagine) is linked at asparagine 122.

Belongs to the alpha-type phospholipase A2 inhibitor family. In terms of assembly, homotrimer; non-covalently linked. Expressed by the liver.

Its subcellular location is the secreted. This phospholipase A2 inhibitor binds directly phospholipase A2 in the presence or absence of calcium. This Bothrops moojeni (Lance-headed viper) protein is Phospholipase A2 inhibitor clone 04.